The chain runs to 381 residues: CCN family member 1 (381 aa).

The N-terminal stretch at methionine 1–serine 24 is a signal peptide. The IGFBP N-terminal domain occupies threonine 25–glutamine 94. Disulfide bonds link cysteine 26-cysteine 50, cysteine 30-cysteine 52, cysteine 32-cysteine 53, cysteine 39-cysteine 56, cysteine 64-cysteine 78, and cysteine 70-cysteine 91. Residues arginine 98 to aspartate 164 form the VWFC domain. Residue serine 188 is modified to Phosphoserine; by FAM20C. In terms of domain architecture, TSP type-1 spans lysine 228 to glycine 273. The interval serine 279–glycine 315 is heparin-binding. Disulfide bonds link cysteine 286–cysteine 323, cysteine 303–cysteine 337, cysteine 314–cysteine 353, cysteine 317–cysteine 355, and cysteine 322–cysteine 359. Positions cysteine 286–proline 360 constitute a CTCK domain.

This sequence belongs to the CCN family. In terms of assembly, interaction with integrins is heparin- and cell-type-dependent and promotes cell adhesion. In skin fibroblasts it binds ITGA6/ITGB1, in endothelial cells, binds ITGAV/ITGB3 and in platelets, ITGA2B/ITGB3. Binds, in vitro, ITGAV/ITGB5.

The protein resides in the secreted. Functionally, promotes cell proliferation, chemotaxis, angiogenesis and cell adhesion. Appears to play a role in wound healing by up-regulating, in skin fibroblasts, the expression of a number of genes involved in angiogenesis, inflammation and matrix remodeling including VEGA-A, VEGA-C, MMP1, MMP3, TIMP1, uPA, PAI-1 and integrins alpha-3 and alpha-5. CCN1-mediated gene regulation is dependent on heparin-binding. Down-regulates the expression of alpha-1 and alpha-2 subunits of collagen type-1. Promotes cell adhesion and adhesive signaling through integrin alpha-6/beta-1, cell migration through integrin alpha-v/beta-5 and cell proliferation through integrin alpha-v/beta-3. This chain is CCN family member 1, found in Homo sapiens (Human).